The chain runs to 549 residues: Hydroxylamine reductase (549 aa).

Residues C3, C6, C15, and C21 each coordinate [4Fe-4S] cluster. 8 residues coordinate hybrid [4Fe-2O-2S] cluster: H244, E268, C313, C405, C433, C458, E492, and K494. C405 is modified (cysteine persulfide).

It belongs to the HCP family. It depends on [4Fe-4S] cluster as a cofactor. The cofactor is hybrid [4Fe-2O-2S] cluster.

The protein resides in the cytoplasm. It carries out the reaction A + NH4(+) + H2O = hydroxylamine + AH2 + H(+). In terms of biological role, catalyzes the reduction of hydroxylamine to form NH(3) and H(2)O. The sequence is that of Hydroxylamine reductase from Crocosphaera subtropica (strain ATCC 51142 / BH68) (Cyanothece sp. (strain ATCC 51142)).